The chain runs to 183 residues: Caltractin ICL1f (183 aa).

The segment covering 1-19 has biased composition (low complexity); that stretch reads MARRGQQPPQQQQQAQPAQ. The segment at 1 to 30 is disordered; sequence MARRGQQPPQQQQQAQPAQKNQAGKFNPAE. 4 consecutive EF-hand domains span residues 39 to 74, 75 to 110, 112 to 147, and 148 to 183; these read EEVL…LGFE, AKNQ…RISE, DSKA…LGET, and MDDS…KTFA. 10 residues coordinate Ca(2+): Asp-52, Asp-54, Thr-56, Ser-58, Glu-63, Asp-88, Asp-90, Ser-92, Gln-94, and Glu-99.

This sequence belongs to the centrin family. As to quaternary structure, monomer.

Its subcellular location is the cytoplasm. It is found in the cytoskeleton. Functionally, plays a fundamental role in microtubule organizing center structure and function. Component of the infraciliary lattice (ICL) and the ciliary basal bodies. The chain is Caltractin ICL1f (Icl1f) from Paramecium tetraurelia.